Here is a 656-residue protein sequence, read N- to C-terminus: CoB--CoM heterodisulfide reductase iron-sulfur subunit A 2 (656 aa).

152–175 is a binding site for FAD; it reads GGGVSGIQAALDLADMGFEVILVE. 4 4Fe-4S ferredoxin-type domains span residues 238-269, 286-315, 577-606, and 610-639; these read KKPR…FDEG, SVFT…FDQE, IVSE…LVEK, and LVAE…QNHF. Residues cysteine 248, cysteine 251, cysteine 254, cysteine 258, cysteine 295, cysteine 298, cysteine 301, cysteine 305, cysteine 586, cysteine 589, cysteine 592, cysteine 596, cysteine 619, cysteine 622, cysteine 625, and cysteine 629 each coordinate [4Fe-4S] cluster.

Belongs to the HdrA family. In terms of assembly, the ferredoxin:CoB-CoM heterodisulfide reductase is composed of three subunits; HdrA, HdrB and HdrC. It depends on [4Fe-4S] cluster as a cofactor. FAD serves as cofactor.

It functions in the pathway cofactor metabolism; coenzyme M-coenzyme B heterodisulfide reduction; coenzyme B and coenzyme M from coenzyme M-coenzyme B heterodisulfide: step 1/1. Part of a complex that catalyzes the reversible reduction of CoM-S-S-CoB to the thiol-coenzymes H-S-CoM (coenzyme M) and H-S-CoB (coenzyme B). This is CoB--CoM heterodisulfide reductase iron-sulfur subunit A 2 (hdrA2) from Methanopyrus kandleri (strain AV19 / DSM 6324 / JCM 9639 / NBRC 100938).